Consider the following 394-residue polypeptide: Lipoyl synthase, chloroplastic (394 aa).

The transit peptide at 1 to 36 (MMHHCSITKPTFSISISTQKLHHHSSKFLNLGFRIR) directs the protein to the chloroplast. The [4Fe-4S] cluster site is built by Cys-127, Cys-132, Cys-138, Cys-158, Cys-162, Cys-165, and Ser-373. Residues 141 to 362 (GGGDGVATAT…KTYGESIGFR (222 aa)) enclose the Radical SAM core domain.

This sequence belongs to the radical SAM superfamily. Lipoyl synthase family. [4Fe-4S] cluster is required as a cofactor. As to expression, expressed in roots, leaves and flowers.

It is found in the plastid. Its subcellular location is the chloroplast. The enzyme catalyses [[Fe-S] cluster scaffold protein carrying a second [4Fe-4S](2+) cluster] + N(6)-octanoyl-L-lysyl-[protein] + 2 oxidized [2Fe-2S]-[ferredoxin] + 2 S-adenosyl-L-methionine + 4 H(+) = [[Fe-S] cluster scaffold protein] + N(6)-[(R)-dihydrolipoyl]-L-lysyl-[protein] + 4 Fe(3+) + 2 hydrogen sulfide + 2 5'-deoxyadenosine + 2 L-methionine + 2 reduced [2Fe-2S]-[ferredoxin]. Its pathway is protein modification; protein lipoylation via endogenous pathway; protein N(6)-(lipoyl)lysine from octanoyl-[acyl-carrier-protein]: step 2/2. Its function is as follows. Catalyzes the radical-mediated insertion of two sulfur atoms into the C-6 and C-8 positions of the octanoyl moiety bound to the lipoyl domains of lipoate-dependent enzymes, thereby converting the octanoylated domains into lipoylated derivatives. Together with LIP2P and LIP2P2 is essential for de novo plastidial protein lipoylation during seed development. This chain is Lipoyl synthase, chloroplastic, found in Arabidopsis thaliana (Mouse-ear cress).